We begin with the raw amino-acid sequence, 246 residues long: Acetoacetate decarboxylase (246 aa).

Lysine 116 acts as the Schiff-base intermediate with acetoacetate in catalysis.

Belongs to the ADC family.

It catalyses the reaction acetoacetate + H(+) = acetone + CO2. Functionally, catalyzes the conversion of acetoacetate to acetone and carbon dioxide. This Burkholderia lata (strain ATCC 17760 / DSM 23089 / LMG 22485 / NCIMB 9086 / R18194 / 383) protein is Acetoacetate decarboxylase.